Here is a 1955-residue protein sequence, read N- to C-terminus: 227 kDa spindle- and centromere-associated protein (1955 aa).

Coiled coils occupy residues 82–129 (KKRI…NDDV), 152–317 (EWAS…ELES), 385–1747 (VRNI…LIAL), and 1770–1813 (ERIV…ERFI). 2 disordered regions span residues 1865-1896 (PTEQ…SYTY) and 1912-1955 (MTSS…TFSE). The segment covering 1878-1896 (RTSSTIKSSEGTTRESYTY) has biased composition (polar residues). The segment covering 1938–1948 (RKSRPATRKQQ) has biased composition (basic residues).

It localises to the cytoplasm. It is found in the cytoskeleton. The protein localises to the microtubule organizing center. The protein resides in the centrosome. Its subcellular location is the chromosome. It localises to the centromere. It is found in the kinetochore. The protein localises to the spindle. Functionally, may play a role in the organization of the spindle apparatus and its interaction with the centromeres. In Parascaris univalens (Nematode worm), this protein is 227 kDa spindle- and centromere-associated protein (PUMA1).